The following is a 239-amino-acid chain: Ribonuclease 3 (239 aa).

One can recognise an RNase III domain in the interval 12–137 (RAKLESLIGH…LIAAIYLDGG (126 aa)). Glu50 contacts Mg(2+). Asp54 is an active-site residue. Positions 123 and 126 each coordinate Mg(2+). Glu126 is an active-site residue. One can recognise a DRBM domain in the interval 162-231 (DAKTELQEWS…ATKMLEREGI (70 aa)).

The protein belongs to the ribonuclease III family. In terms of assembly, homodimer. It depends on Mg(2+) as a cofactor.

It localises to the cytoplasm. It carries out the reaction Endonucleolytic cleavage to 5'-phosphomonoester.. Digests double-stranded RNA. Involved in the processing of primary rRNA transcript to yield the immediate precursors to the large and small rRNAs (23S and 16S). Processes some mRNAs, and tRNAs when they are encoded in the rRNA operon. Processes pre-crRNA and tracrRNA of type II CRISPR loci if present in the organism. The chain is Ribonuclease 3 from Rhizobium etli (strain CIAT 652).